The sequence spans 214 residues: MSDTQHSCVIIGIAGASASGKSLIAQTIYEELVAELGAGQIGVITEDCYYRDQTHLTMEERVKTNYDHPNALDHDLLVQHLSQLVQGDAVNIPQYSYTEHTRMSEVTPFAPRRVIILEGILLLTDSRLRDLMDASIFMDTPLDICLLRRLVRDVQERGRTMDSVLKQYQKTVRPMFLQFIEPSKQYADVIVPRGGKNRIAIDMLKARIRHMLIG.

15–22 (GASASGKS) is a binding site for ATP.

The protein belongs to the uridine kinase family.

It is found in the cytoplasm. The catalysed reaction is uridine + ATP = UMP + ADP + H(+). It catalyses the reaction cytidine + ATP = CMP + ADP + H(+). The protein operates within pyrimidine metabolism; CTP biosynthesis via salvage pathway; CTP from cytidine: step 1/3. Its pathway is pyrimidine metabolism; UMP biosynthesis via salvage pathway; UMP from uridine: step 1/1. This is Uridine kinase from Aeromonas hydrophila subsp. hydrophila (strain ATCC 7966 / DSM 30187 / BCRC 13018 / CCUG 14551 / JCM 1027 / KCTC 2358 / NCIMB 9240 / NCTC 8049).